We begin with the raw amino-acid sequence, 545 residues long: Esterase-5C (545 aa).

The N-terminal stretch at 1–19 is a signal peptide; it reads MLAARLIILLSFYWLSASA. An intrachain disulfide couples Cys84 to Cys103. A glycan (N-linked (GlcNAc...) asparagine) is linked at Asn113. Ser207 acts as the Acyl-ester intermediate in catalysis. Cys259 and Cys271 are joined by a disulfide. Asn421 carries an N-linked (GlcNAc...) asparagine glycan. The active-site Charge relay system is His467. N-linked (GlcNAc...) asparagine glycosylation occurs at Asn507. Cys515 and Cys536 form a disulfide bridge.

The protein belongs to the type-B carboxylesterase/lipase family.

It is found in the secreted. It carries out the reaction a carboxylic ester + H2O = an alcohol + a carboxylate + H(+). In Drosophila persimilis (Fruit fly), this protein is Esterase-5C (Est-5C).